Reading from the N-terminus, the 120-residue chain is Non-specific lipid-transfer protein 2 (120 aa).

An N-terminal signal peptide occupies residues 1 to 25; sequence MATSMKLACVALVMCMVVIAPMAEA. 4 disulfides stabilise this stretch: cysteine 29–cysteine 78, cysteine 39–cysteine 55, cysteine 56–cysteine 101, and cysteine 76–cysteine 115.

This sequence belongs to the plant LTP family. As to expression, expressed in roots, stem, leaves and tendrils of the mature plant.

Plant non-specific lipid-transfer proteins transfer phospholipids as well as galactolipids across membranes. May play a role in wax or cutin deposition in the cell walls of expanding epidermal cells and certain secretory tissues. In Pisum sativum (Garden pea), this protein is Non-specific lipid-transfer protein 2.